Here is a 100-residue protein sequence, read N- to C-terminus: Urease subunit gamma (100 aa).

It belongs to the urease gamma subunit family. As to quaternary structure, probable heterotrimer of UreA (gamma), UreB (beta) and UreC (alpha) subunits. Three heterotrimers associate to form the active enzyme. The trimeric urease interacts with an accessory complex composed of UreD, UreF and UreG, which is required for the assembly of the nickel containing metallocenter of UreC. The UreE protein may also play a direct role in nickel transfer to the urease apoprotein.

It localises to the cytoplasm. It catalyses the reaction urea + 2 H2O + H(+) = hydrogencarbonate + 2 NH4(+). It functions in the pathway nitrogen metabolism; urea degradation; CO(2) and NH(3) from urea (urease route): step 1/1. The chain is Urease subunit gamma from Proteus mirabilis (strain HI4320).